A 152-amino-acid polypeptide reads, in one-letter code: uncharacterized protein (152 aa).

5 helical membrane-spanning segments follow: residues 2–22 (GVVF…LKLM), 33–53 (LKMI…WLIM), 58–78 (FLIE…LIYL), 97–117 (FMGN…IEYV), and 122–142 (IASP…FFNC).

It localises to the cell membrane. This is an uncharacterized protein from Methanocaldococcus jannaschii (strain ATCC 43067 / DSM 2661 / JAL-1 / JCM 10045 / NBRC 100440) (Methanococcus jannaschii).